A 281-amino-acid chain; its full sequence is N-acetylmuramic acid 6-phosphate etherase (281 aa).

In terms of domain architecture, SIS spans 63–226 (IVPRMKQGGR…TTSVMIQLGR (164 aa)). The Proton donor role is filled by E91. E122 is an active-site residue.

The protein belongs to the GCKR-like family. MurNAc-6-P etherase subfamily. In terms of assembly, homodimer.

It catalyses the reaction N-acetyl-D-muramate 6-phosphate + H2O = N-acetyl-D-glucosamine 6-phosphate + (R)-lactate. It functions in the pathway amino-sugar metabolism; N-acetylmuramate degradation. In terms of biological role, specifically catalyzes the cleavage of the D-lactyl ether substituent of MurNAc 6-phosphate, producing GlcNAc 6-phosphate and D-lactate. This chain is N-acetylmuramic acid 6-phosphate etherase, found in Bacteroides fragilis (strain ATCC 25285 / DSM 2151 / CCUG 4856 / JCM 11019 / LMG 10263 / NCTC 9343 / Onslow / VPI 2553 / EN-2).